A 99-amino-acid polypeptide reads, in one-letter code: Large ribosomal subunit protein eL36A (99 aa).

It belongs to the eukaryotic ribosomal protein eL36 family. As to quaternary structure, component of the large ribosomal subunit (LSU). Mature yeast ribosomes consist of a small (40S) and a large (60S) subunit. The 40S small subunit contains 1 molecule of ribosomal RNA (18S rRNA) and at least 33 different proteins. The large 60S subunit contains 3 rRNA molecules (25S, 5.8S and 5S rRNA) and at least 46 different proteins.

It is found in the cytoplasm. Component of the ribosome, a large ribonucleoprotein complex responsible for the synthesis of proteins in the cell. The small ribosomal subunit (SSU) binds messenger RNAs (mRNAs) and translates the encoded message by selecting cognate aminoacyl-transfer RNA (tRNA) molecules. The large subunit (LSU) contains the ribosomal catalytic site termed the peptidyl transferase center (PTC), which catalyzes the formation of peptide bonds, thereby polymerizing the amino acids delivered by tRNAs into a polypeptide chain. The nascent polypeptides leave the ribosome through a tunnel in the LSU and interact with protein factors that function in enzymatic processing, targeting, and the membrane insertion of nascent chains at the exit of the ribosomal tunnel. The chain is Large ribosomal subunit protein eL36A (rpl3601) from Schizosaccharomyces pombe (strain 972 / ATCC 24843) (Fission yeast).